Consider the following 474-residue polypeptide: Trifunctional enzyme subunit beta, mitochondrial (474 aa).

A mitochondrion-targeting transit peptide spans 1–33; it reads MTILTYPFKNLPTASKWALRFSIRPLSCSSQLR. Lys-72 bears the N6-acetyllysine; alternate mark. Lys-72 is subject to N6-succinyllysine; alternate. The Acyl-thioester intermediate role is filled by Cys-138. Residues 173-220 lie within the membrane without spanning it; sequence IRHSRKMRKLMLDLNKAKSMGQRLSLISKFRFNFLAPELPAVSEFSTS. N6-acetyllysine; alternate is present on Lys-188. N6-succinyllysine; alternate is present on Lys-188. N6-succinyllysine is present on residues Lys-190, Lys-272, and Lys-291. Position 293 is an N6-acetyllysine; alternate (Lys-293). Lys-293 bears the N6-succinyllysine; alternate mark. Residue Lys-298 is modified to N6-acetyllysine. Lys-332 is modified (N6-acetyllysine; alternate). Lys-332 bears the N6-succinyllysine; alternate mark. Lys-348 and Lys-361 each carry N6-acetyllysine. The Proton donor/acceptor role is filled by Cys-458.

Belongs to the thiolase-like superfamily. Thiolase family. As to quaternary structure, heterotetramer of 2 alpha/HADHA and 2 beta/HADHB subunits; forms the mitochondrial trifunctional enzyme. Also purified as higher order heterooligomers including a 4 alpha/HADHA and 4 beta/HADHB heterooligomer which physiological significance remains unclear. The mitochondrial trifunctional enzyme interacts with MTLN. Interacts with RSAD2/viperin.

The protein localises to the mitochondrion. The protein resides in the mitochondrion inner membrane. It is found in the mitochondrion outer membrane. Its subcellular location is the endoplasmic reticulum. It catalyses the reaction an acyl-CoA + acetyl-CoA = a 3-oxoacyl-CoA + CoA. It carries out the reaction butanoyl-CoA + acetyl-CoA = 3-oxohexanoyl-CoA + CoA. The catalysed reaction is hexanoyl-CoA + acetyl-CoA = 3-oxooctanoyl-CoA + CoA. The enzyme catalyses octanoyl-CoA + acetyl-CoA = 3-oxodecanoyl-CoA + CoA. It catalyses the reaction decanoyl-CoA + acetyl-CoA = 3-oxododecanoyl-CoA + CoA. It carries out the reaction dodecanoyl-CoA + acetyl-CoA = 3-oxotetradecanoyl-CoA + CoA. The catalysed reaction is tetradecanoyl-CoA + acetyl-CoA = 3-oxohexadecanoyl-CoA + CoA. It participates in lipid metabolism; fatty acid beta-oxidation. Mitochondrial trifunctional enzyme catalyzes the last three of the four reactions of the mitochondrial beta-oxidation pathway. The mitochondrial beta-oxidation pathway is the major energy-producing process in tissues and is performed through four consecutive reactions breaking down fatty acids into acetyl-CoA. Among the enzymes involved in this pathway, the trifunctional enzyme exhibits specificity for long-chain fatty acids. Mitochondrial trifunctional enzyme is a heterotetrameric complex composed of two proteins, the trifunctional enzyme subunit alpha/HADHA carries the 2,3-enoyl-CoA hydratase and the 3-hydroxyacyl-CoA dehydrogenase activities, while the trifunctional enzyme subunit beta/HADHB described here bears the 3-ketoacyl-CoA thiolase activity. This Homo sapiens (Human) protein is Trifunctional enzyme subunit beta, mitochondrial (HADHB).